The sequence spans 204 residues: Leucyl/phenylalanyl-tRNA--protein transferase (204 aa).

This sequence belongs to the L/F-transferase family.

It is found in the cytoplasm. The catalysed reaction is N-terminal L-lysyl-[protein] + L-leucyl-tRNA(Leu) = N-terminal L-leucyl-L-lysyl-[protein] + tRNA(Leu) + H(+). It catalyses the reaction N-terminal L-arginyl-[protein] + L-leucyl-tRNA(Leu) = N-terminal L-leucyl-L-arginyl-[protein] + tRNA(Leu) + H(+). The enzyme catalyses L-phenylalanyl-tRNA(Phe) + an N-terminal L-alpha-aminoacyl-[protein] = an N-terminal L-phenylalanyl-L-alpha-aminoacyl-[protein] + tRNA(Phe). Its function is as follows. Functions in the N-end rule pathway of protein degradation where it conjugates Leu, Phe and, less efficiently, Met from aminoacyl-tRNAs to the N-termini of proteins containing an N-terminal arginine or lysine. The polypeptide is Leucyl/phenylalanyl-tRNA--protein transferase (Rhizobium leguminosarum bv. trifolii (strain WSM2304)).